Consider the following 243-residue polypeptide: R-spondin-2 (243 aa).

Residues 1–21 (MQFQLFSFALIILNCVDYSHC) form the signal peptide. 11 cysteine pairs are disulfide-bonded: Cys-40/Cys-46, Cys-43/Cys-52, Cys-55/Cys-74, Cys-78/Cys-93, Cys-96/Cys-104, Cys-101/Cys-110, Cys-113/Cys-124, Cys-128/Cys-141, Cys-145/Cys-187, Cys-156/Cys-163, and Cys-196/Cys-203. The stretch at 90–134 (MNRCSRCRIENCDSCFSRDFCIKCKSGFYSLKGQCFEECPEGFAP) is one FU repeat. The TSP type-1 domain occupies 144 to 204 (GCEVGPWSEW…RCKMAIRHCP (61 aa)). Asn-160 carries N-linked (GlcNAc...) asparagine glycosylation. The segment covering 204–224 (PGGKRTTKKKDKRNKKKKKKL) has biased composition (basic residues). Positions 204–243 (PGGKRTTKKKDKRNKKKKKKLLERAQEQHSVVLATDRSSQ) are disordered.

The protein belongs to the R-spondin family. In terms of assembly, binds heparin.

The protein resides in the secreted. Activator of the canonical Wnt signaling pathway by acting as a ligand for lgr4-6 receptors. Upon binding to lgr4-6 (lgr4, lgr5 or lgr6), lgr4-6 associate with phosphorylated lrp6 and frizzled receptors that are activated by extracellular Wnt receptors, triggering the canonical Wnt signaling pathway to increase expression of target genes. Acts both in the canonical Wnt/beta-catenin-dependent pathway and in non-canonical Wnt signaling pathway. Activates neural markers and promotes muscle formation. Overexpression blocks activin, nodal and BMP4 signaling, suggesting that it may negatively regulate the TGF-beta pathway. During embryonic development, plays a crucial role in limb specification, amplifying the Wnt signaling pathway independently of LGR4-6 receptors, possibly by acting as a direct antagonistic ligand to RNF43 and ZNRF3, hence governing the number of limbs an embryo should form. In Xenopus laevis (African clawed frog), this protein is R-spondin-2 (rspo2).